We begin with the raw amino-acid sequence, 172 residues long: MEEHLSVMYERLRQELPKLFLQSHDYSLYSLDVEFINEILNIRTKGRTWYILSLTLCRFLAWNYFSQLRLEVLQLTRHPENWTLQARWRLVGLPVHLLFLRFYKRDKDELYRTYDAYSTFYLNSSGLICRHRLDKLMPSHSPPTPVKKLLVGALVALGLSEPEPNLNLCSKP.

This is an uncharacterized protein from Macaca mulatta (Rhesus macaque).